The chain runs to 426 residues: Enolase (426 aa).

(2R)-2-phosphoglycerate is bound at residue Q163. E205 acts as the Proton donor in catalysis. Mg(2+) is bound by residues D242, E285, and D312. (2R)-2-phosphoglycerate contacts are provided by K337, R366, S367, and K388. K337 functions as the Proton acceptor in the catalytic mechanism.

It belongs to the enolase family. Mg(2+) is required as a cofactor.

It localises to the cytoplasm. The protein localises to the secreted. It is found in the cell surface. The enzyme catalyses (2R)-2-phosphoglycerate = phosphoenolpyruvate + H2O. It functions in the pathway carbohydrate degradation; glycolysis; pyruvate from D-glyceraldehyde 3-phosphate: step 4/5. Its function is as follows. Catalyzes the reversible conversion of 2-phosphoglycerate (2-PG) into phosphoenolpyruvate (PEP). It is essential for the degradation of carbohydrates via glycolysis. In Caulobacter vibrioides (strain ATCC 19089 / CIP 103742 / CB 15) (Caulobacter crescentus), this protein is Enolase.